Consider the following 427-residue polypeptide: Enolase (427 aa).

Q163 is a binding site for (2R)-2-phosphoglycerate. Catalysis depends on E205, which acts as the Proton donor. 3 residues coordinate Mg(2+): D242, E283, and D310. K335, R364, S365, and K386 together coordinate (2R)-2-phosphoglycerate. The active-site Proton acceptor is K335.

It belongs to the enolase family. The cofactor is Mg(2+).

The protein resides in the cytoplasm. The protein localises to the secreted. It is found in the cell surface. The enzyme catalyses (2R)-2-phosphoglycerate = phosphoenolpyruvate + H2O. It participates in carbohydrate degradation; glycolysis; pyruvate from D-glyceraldehyde 3-phosphate: step 4/5. Functionally, catalyzes the reversible conversion of 2-phosphoglycerate (2-PG) into phosphoenolpyruvate (PEP). It is essential for the degradation of carbohydrates via glycolysis. The sequence is that of Enolase from Salinispora arenicola (strain CNS-205).